Consider the following 548-residue polypeptide: Chaperonin GroEL (548 aa).

Residues 30-33 (TLGP), Lys51, 87-91 (DGTTT), Gly415, 479-481 (NAA), and Asp495 each bind ATP.

It belongs to the chaperonin (HSP60) family. As to quaternary structure, forms a cylinder of 14 subunits composed of two heptameric rings stacked back-to-back. Interacts with the co-chaperonin GroES.

The protein resides in the cytoplasm. It carries out the reaction ATP + H2O + a folded polypeptide = ADP + phosphate + an unfolded polypeptide.. Functionally, together with its co-chaperonin GroES, plays an essential role in assisting protein folding. The GroEL-GroES system forms a nano-cage that allows encapsulation of the non-native substrate proteins and provides a physical environment optimized to promote and accelerate protein folding. The protein is Chaperonin GroEL of Pseudomonas fluorescens (strain Pf0-1).